The primary structure comprises 477 residues: MSEIIESTVAFLIGLLKASWTRTAWHFAVLSFVYVIARSIYRVWFHPLSSYPGPKLAALTQLWYARHWMGGRYPFAIEEAHRRYGEVVRIAPNELSFNTAQSFNEIYGHTTKDHKPFIKGTFYEHYQPEPGIVAERNPEKHRETRKLLAHGFSARALKAQESIIAQYSDLFLAQVKKLAKSHFWIDTIHDAGILVTLFEIGRRLPLLWPLILFSLPNGIKKKFDLFLKYSRDLVRTRVARQNTLTREDFFARLLADKSHSQSEEWLLAQANVLVIAGSDTTATALTTLIYYLAAHQDKLWHLQQELRETFDEASDMTSEKLQGMLYLNAVIEEGLRICPPTAFGLPRISPGAMVDGRLIPKGTVVSTSSWTTAHREDYFHDARGFHPERWLPAGHALWNAKFQHDHLSASKPFSLGPRGCLGVNLAYMEMRITLAKLAWKFDWELVNADQLDWESELRFEGFWKLPVPRVRFYCIHV.

Residues 24 to 41 (AWHFAVLSFVYVIARSIY) form a helical membrane-spanning segment. Cys-420 is a binding site for heme.

It belongs to the cytochrome P450 family. Requires heme as cofactor.

The protein resides in the membrane. It functions in the pathway secondary metabolite biosynthesis. In terms of biological role, cytochrome P450 monooxygenase; part of the gene cluster that mediates the biosynthesis of oxaleimides, cytotoxic compounds containing an unusual disubstituted succinimide moiety. The first step of the pathway is provided by the HR-PKS poxF that serves in a new mode of collaborative biosynthesis with the PKS-NRPS poxE, by providing the olefin containing amino acid substrate via the synthesis of an ACP-bound dec-4-enoate. The cytochrome P450 monooxygenase poxM-catalyzed oxidation at the alpha-position creates the enzyme-bound 2-hydroxydec-4-enoyl-ACP thioester, which may be prone to spontaneous hydrolysis to yield 2-hydroxydec-4-enoic acid due to increased electrophilicity of the carbonyl. 2-hydroxydec-4-enoic acid can then be further oxidized by poxM to yield the alpha-ketoacid 2-oxodec-4-enoicacid, which is reductively aminated by the aminotransferase poxL to yield (S,E)-2-aminodec-4-enoic acid. The Hybrid PKS-NRPS synthetase poxE then performs condensation between the octaketide product of its PKS modules and the amino group of (S,E)-2-aminodec-4-enoic acid which is activated and incorporated by the adenylation domain. The resulting aminoacyl product can be cyclized by the Diels-Alderase PoxQ and reductively released by the reductive (R) domain of poxE to yield an aldehyde intermediate. The released aldehyde is then substrate for a Knoevenagel condensation by the hydrolyase poxO followed by an oxidation at the 5-position of the pyrrolidone ring. The presence of the olefin from the amino acid building block allows for migration of the substituted allyl group to occur. This allylic transposition reaction takes place in a conjugate addition, semipinacol-like fashion to yield a succinimide intermediate. Iterative two-electron oxidations of the C7 methyl of the succinimide intermediate to the carboxylic acid can be catalyzed by one of two remaining cytochrome P450 monooxygenasess poxC or poxD to yield oxaleimide A. Subsequent oxidation yields the maleimide scaffold oxaleimide I. Both oxaleimide A and oxaleimide I can undergo oxidative modifications in the decalin ring to yield the series of products oxaleimides B to H. This is Cytochrome P450 monooxygenase poxC from Penicillium oxalicum (strain 114-2 / CGMCC 5302) (Penicillium decumbens).